An 89-amino-acid polypeptide reads, in one-letter code: Small ribosomal subunit protein uS15 (89 aa).

The protein belongs to the universal ribosomal protein uS15 family. Part of the 30S ribosomal subunit. Forms a bridge to the 50S subunit in the 70S ribosome, contacting the 23S rRNA.

Its function is as follows. One of the primary rRNA binding proteins, it binds directly to 16S rRNA where it helps nucleate assembly of the platform of the 30S subunit by binding and bridging several RNA helices of the 16S rRNA. Functionally, forms an intersubunit bridge (bridge B4) with the 23S rRNA of the 50S subunit in the ribosome. The polypeptide is Small ribosomal subunit protein uS15 (Mannheimia succiniciproducens (strain KCTC 0769BP / MBEL55E)).